Reading from the N-terminus, the 139-residue chain is Cystatin-11 (139 aa).

The signal sequence occupies residues 1-28; it reads MAAGSWKATRLLLAILVALVAFSYQVKR. Cystine bridges form between Cys-94–Cys-102 and Cys-115–Cys-135. The N-linked (GlcNAc...) asparagine glycan is linked to Asn-134.

It belongs to the cystatin family. Expressed in epididymis, where it localizes to the proximal caput and also part of the midcaput. Not detected in other tissues tested.

It is found in the secreted. Functionally, has antibacterial activity against the Gram-negative bacteria E.coli. May play a role in sperm maturation and fertilization. The chain is Cystatin-11 from Mus musculus (Mouse).